Here is a 353-residue protein sequence, read N- to C-terminus: GTPase Obg (353 aa).

In terms of domain architecture, Obg spans 1–159 (MKFLDEAKVY…RWIWLRLKLI (159 aa)). The region spanning 160–327 (ADAGLVGLPN…ALRALVAVIG (168 aa)) is the OBG-type G domain. Residues 166-173 (GLPNAGKS), 191-195 (FTTLH), 212-215 (DIPG), 279-282 (NKID), and 308-310 (SGV) contribute to the GTP site. Residues S173 and T193 each coordinate Mg(2+).

The protein belongs to the TRAFAC class OBG-HflX-like GTPase superfamily. OBG GTPase family. Monomer. Mg(2+) serves as cofactor.

It is found in the cytoplasm. An essential GTPase which binds GTP, GDP and possibly (p)ppGpp with moderate affinity, with high nucleotide exchange rates and a fairly low GTP hydrolysis rate. Plays a role in control of the cell cycle, stress response, ribosome biogenesis and in those bacteria that undergo differentiation, in morphogenesis control. The sequence is that of GTPase Obg from Rhodopseudomonas palustris (strain ATCC BAA-98 / CGA009).